The following is a 406-amino-acid chain: Transcriptional activator NprA (406 aa).

4 TPR repeats span residues 125–158 (YYYY…FRSQ), 206–239 (AECH…AQII), 246–279 (GTIE…KRNS), and 285–318 (FITL…LKRE).

In terms of biological role, activates the transcription of nprS by about five fold. May bind to the upstream region of nprS promoter. This is Transcriptional activator NprA (nprA) from Geobacillus stearothermophilus (Bacillus stearothermophilus).